The primary structure comprises 278 residues: Cation-dependent mannose-6-phosphate receptor (278 aa).

Positions methionine 1 to alanine 21 are cleaved as a signal peptide. Over valine 22–histidine 186 the chain is Lumenal. The 152-residue stretch at lysine 31–proline 182 folds into the MRH domain. A disulfide bond links cysteine 33 and cysteine 79. Asparagine 58, asparagine 84, asparagine 95, asparagine 108, and asparagine 114 each carry an N-linked (GlcNAc...) asparagine glycan. 2 disulfides stabilise this stretch: cysteine 133–cysteine 168 and cysteine 146–cysteine 180. The chain crosses the membrane as a helical span at residues leucine 187–tyrosine 211. The Cytoplasmic segment spans residues glutamine 212–methionine 278. The tract at residues arginine 257–methionine 278 is disordered. Serine 268 bears the Phosphoserine mark.

As to quaternary structure, homodimer. Binds GGA1, GGA2 and GGA3.

Its subcellular location is the lysosome membrane. Transport of phosphorylated lysosomal enzymes from the Golgi complex and the cell surface to lysosomes. Lysosomal enzymes bearing phosphomannosyl residues bind specifically to mannose-6-phosphate receptors in the Golgi apparatus and the resulting receptor-ligand complex is transported to an acidic prelyosomal compartment where the low pH mediates the dissociation of the complex. This Mus musculus (Mouse) protein is Cation-dependent mannose-6-phosphate receptor (M6pr).